The following is a 131-amino-acid chain: Large ribosomal subunit protein bL12 (131 aa).

A compositionally biased stretch (basic and acidic residues) spans 99-125 (ESTPKPIKEGTNKDDAEETKKKLEEAG). The tract at residues 99 to 131 (ESTPKPIKEGTNKDDAEETKKKLEEAGAKVTVK) is disordered.

Belongs to the bacterial ribosomal protein bL12 family. In terms of assembly, homodimer. Part of the ribosomal stalk of the 50S ribosomal subunit. Forms a multimeric L10(L12)X complex, where L10 forms an elongated spine to which 2 to 4 L12 dimers bind in a sequential fashion. Binds GTP-bound translation factors.

Forms part of the ribosomal stalk which helps the ribosome interact with GTP-bound translation factors. Is thus essential for accurate translation. This chain is Large ribosomal subunit protein bL12, found in Gloeothece citriformis (strain PCC 7424) (Cyanothece sp. (strain PCC 7424)).